A 542-amino-acid chain; its full sequence is CTP synthase (542 aa).

Residues 1–265 (MTRYIFVTGG…DDFVVERFGL (265 aa)) are amidoligase domain. CTP is bound at residue Ser13. Position 13 (Ser13) interacts with UTP. ATP is bound by residues 14–19 (SLGKGI) and Asp71. Residues Asp71 and Glu139 each contribute to the Mg(2+) site. Residues 146 to 148 (DIE), 186 to 191 (KTKPTQ), and Lys222 contribute to the CTP site. Residues 186 to 191 (KTKPTQ) and Lys222 each bind UTP. The Glutamine amidotransferase type-1 domain occupies 290-541 (TIAMVGKYME…VKAALAQKNK (252 aa)). Gly351 serves as a coordination point for L-glutamine. The active-site Nucleophile; for glutamine hydrolysis is Cys378. L-glutamine contacts are provided by residues 379–382 (LGMQ), Glu402, and Arg469. Active-site residues include His514 and Glu516.

The protein belongs to the CTP synthase family. As to quaternary structure, homotetramer.

It carries out the reaction UTP + L-glutamine + ATP + H2O = CTP + L-glutamate + ADP + phosphate + 2 H(+). The catalysed reaction is L-glutamine + H2O = L-glutamate + NH4(+). The enzyme catalyses UTP + NH4(+) + ATP = CTP + ADP + phosphate + 2 H(+). The protein operates within pyrimidine metabolism; CTP biosynthesis via de novo pathway; CTP from UDP: step 2/2. With respect to regulation, allosterically activated by GTP, when glutamine is the substrate; GTP has no effect on the reaction when ammonia is the substrate. The allosteric effector GTP functions by stabilizing the protein conformation that binds the tetrahedral intermediate(s) formed during glutamine hydrolysis. Inhibited by the product CTP, via allosteric rather than competitive inhibition. Functionally, catalyzes the ATP-dependent amination of UTP to CTP with either L-glutamine or ammonia as the source of nitrogen. Regulates intracellular CTP levels through interactions with the four ribonucleotide triphosphates. The polypeptide is CTP synthase (Pseudomonas putida (strain W619)).